We begin with the raw amino-acid sequence, 337 residues long: Holliday junction branch migration complex subunit RuvB (337 aa).

The segment at 1–182 (MSEEKSVLRD…FGAVFRLSYY (182 aa)) is large ATPase domain (RuvB-L). Residues L21, R22, G63, K66, T67, T68, 129–131 (EDY), R172, Y182, and R219 each bind ATP. T67 provides a ligand contact to Mg(2+). Residues 183 to 253 (KLEEIKQIVR…ITQLALTKLG (71 aa)) are small ATPAse domain (RuvB-S). A head domain (RuvB-H) region spans residues 256–337 (HKGLDASDYL…VKYYKGLLDN (82 aa)). 2 residues coordinate DNA: R311 and R316.

This sequence belongs to the RuvB family. In terms of assembly, homohexamer. Forms an RuvA(8)-RuvB(12)-Holliday junction (HJ) complex. HJ DNA is sandwiched between 2 RuvA tetramers; dsDNA enters through RuvA and exits via RuvB. An RuvB hexamer assembles on each DNA strand where it exits the tetramer. Each RuvB hexamer is contacted by two RuvA subunits (via domain III) on 2 adjacent RuvB subunits; this complex drives branch migration. In the full resolvosome a probable DNA-RuvA(4)-RuvB(12)-RuvC(2) complex forms which resolves the HJ.

Its subcellular location is the cytoplasm. It carries out the reaction ATP + H2O = ADP + phosphate + H(+). Functionally, the RuvA-RuvB-RuvC complex processes Holliday junction (HJ) DNA during genetic recombination and DNA repair, while the RuvA-RuvB complex plays an important role in the rescue of blocked DNA replication forks via replication fork reversal (RFR). RuvA specifically binds to HJ cruciform DNA, conferring on it an open structure. The RuvB hexamer acts as an ATP-dependent pump, pulling dsDNA into and through the RuvAB complex. RuvB forms 2 homohexamers on either side of HJ DNA bound by 1 or 2 RuvA tetramers; 4 subunits per hexamer contact DNA at a time. Coordinated motions by a converter formed by DNA-disengaged RuvB subunits stimulates ATP hydrolysis and nucleotide exchange. Immobilization of the converter enables RuvB to convert the ATP-contained energy into a lever motion, pulling 2 nucleotides of DNA out of the RuvA tetramer per ATP hydrolyzed, thus driving DNA branch migration. The RuvB motors rotate together with the DNA substrate, which together with the progressing nucleotide cycle form the mechanistic basis for DNA recombination by continuous HJ branch migration. Branch migration allows RuvC to scan DNA until it finds its consensus sequence, where it cleaves and resolves cruciform DNA. This chain is Holliday junction branch migration complex subunit RuvB, found in Acholeplasma laidlawii (strain PG-8A).